The sequence spans 340 residues: L-threonine 3-dehydrogenase (340 aa).

Zn(2+) is bound at residue Cys38. Residues Thr40 and His43 each act as charge relay system in the active site. Residues His63, Glu64, Cys93, Cys96, Cys99, and Cys107 each coordinate Zn(2+). NAD(+)-binding positions include Ile175, Asp195, Arg200, 261-263 (LGI), and 285-286 (IY).

Belongs to the zinc-containing alcohol dehydrogenase family. Homotetramer. Zn(2+) serves as cofactor.

The protein resides in the cytoplasm. The catalysed reaction is L-threonine + NAD(+) = (2S)-2-amino-3-oxobutanoate + NADH + H(+). It participates in amino-acid degradation; L-threonine degradation via oxydo-reductase pathway; glycine from L-threonine: step 1/2. Catalyzes the NAD(+)-dependent oxidation of L-threonine to 2-amino-3-ketobutyrate. This chain is L-threonine 3-dehydrogenase, found in Xanthomonas oryzae pv. oryzae (strain MAFF 311018).